The sequence spans 375 residues: Alcohol dehydrogenase 1 (375 aa).

The residue at position 2 (S2) is an N-acetylserine. Residues C47, H68, C98, C101, C104, C112, and C175 each contribute to the Zn(2+) site. Residues W200 to G205, D224, and K229 contribute to the NAD(+) site. K234 bears the N6-succinyllysine mark. NAD(+) is bound at residue V293 to V295. K340 bears the N6-succinyllysine mark. R370 provides a ligand contact to NAD(+).

The protein belongs to the zinc-containing alcohol dehydrogenase family. Class-I subfamily. As to quaternary structure, homodimer. Requires Zn(2+) as cofactor.

The protein resides in the cytoplasm. It catalyses the reaction a primary alcohol + NAD(+) = an aldehyde + NADH + H(+). The catalysed reaction is a secondary alcohol + NAD(+) = a ketone + NADH + H(+). The sequence is that of Alcohol dehydrogenase 1 (ADH1) from Geomys knoxjonesi (Jones' pocket gopher).